Reading from the N-terminus, the 276-residue chain is Hydroxyethylthiazole kinase (276 aa).

Residues M53 and A202 each contribute to the substrate site.

The protein belongs to the Thz kinase family. The cofactor is Mg(2+).

It carries out the reaction 5-(2-hydroxyethyl)-4-methylthiazole + ATP = 4-methyl-5-(2-phosphooxyethyl)-thiazole + ADP + H(+). It functions in the pathway cofactor biosynthesis; thiamine diphosphate biosynthesis; 4-methyl-5-(2-phosphoethyl)-thiazole from 5-(2-hydroxyethyl)-4-methylthiazole: step 1/1. Functionally, thiazole kinase involved in thiamine salvage pathway. In Arabidopsis thaliana (Mouse-ear cress), this protein is Hydroxyethylthiazole kinase (THIM).